Here is a 763-residue protein sequence, read N- to C-terminus: Protein translocase subunit SecA 2 (763 aa).

ATP is bound by residues glutamine 83, 101 to 105 (GEGKT), and aspartate 490.

Belongs to the SecA family. As to quaternary structure, monomer and homodimer. Part of the essential Sec protein translocation apparatus which comprises SecA, SecYEG and auxiliary proteins SecDF. Other proteins may also be involved.

It is found in the cell membrane. Its subcellular location is the cytoplasm. It carries out the reaction ATP + H2O + cellular proteinSide 1 = ADP + phosphate + cellular proteinSide 2.. Functionally, part of the Sec protein translocase complex. Interacts with the SecYEG preprotein conducting channel. Has a central role in coupling the hydrolysis of ATP to the transfer of proteins into and across the cell membrane, serving as an ATP-driven molecular motor driving the stepwise translocation of polypeptide chains across the membrane. In Corynebacterium glutamicum (strain ATCC 13032 / DSM 20300 / JCM 1318 / BCRC 11384 / CCUG 27702 / LMG 3730 / NBRC 12168 / NCIMB 10025 / NRRL B-2784 / 534), this protein is Protein translocase subunit SecA 2.